We begin with the raw amino-acid sequence, 128 residues long: Large ribosomal subunit protein bL17 (128 aa).

Belongs to the bacterial ribosomal protein bL17 family. Part of the 50S ribosomal subunit. Contacts protein L32.

This Pseudomonas fluorescens (strain ATCC BAA-477 / NRRL B-23932 / Pf-5) protein is Large ribosomal subunit protein bL17.